A 161-amino-acid polypeptide reads, in one-letter code: Photosystem I reaction center subunit XI (161 aa).

2 consecutive transmembrane segments (helical) span residues 84–104 (LISTIALVLIATICLSAYGLV) and 126–146 (FTGGFFIGAMGGAVVAFFLLE).

Belongs to the PsaL family.

The protein localises to the cellular thylakoid membrane. The sequence is that of Photosystem I reaction center subunit XI from Trichodesmium erythraeum (strain IMS101).